The sequence spans 892 residues: MSSLASQGNNASTPAYRYGFQTSEVGDRPTVSMPSQPESSAMLEDDGMVKRKPFAAIGEAIPKVIDTTGESVREAFEEFLLSFSDDRVAGGDALPSASQEKYYVQQIHGLAMYEIHTVYVDYKHLTSYNDVLALAIVEQYYRFSPFLLRALQKLIEKFEPEYYRSSLSRENASLSPNFKASDKTFALAFYNLPFRSTIRDLRTDRIGRLTTITGTVTRTSEVRPELAQGTFICEECHTVVSNVEQAFRYTEPTQCPNELCANKRSWRLNISQSSFQDWQKVRIQENSNEIPTGSMPRTLDVILRGDIVERAKAGDKCAFTGILIAVPDVSQLGIPGVKPEAYRDSRNFGGRDADGVTGLKSLGVRDLTYKLSFLACMVQPDDANDKSGADVRGDGSQGIEEQDEFLQSLSQEEIDDLRAMVHSDHIYSRLTNSLAPSVYGHEIIKKGILLQLMGGVHKLTPEGINLRGDLNICIVGDPSTSKSQFLKYVCNFLPRAIYTSGKASSAAGLTAAVVKDEETGDFTIEAGALMLADNGICAIDEFDKMDLSDQVAIHEAMEQQTISIAKAGIQATLNARTSILAAANPIGGRYNRKTTLRNNINMSAPIMSRFDLFFVVLDECNESVDRHLAKHIVDIHRLRDDAMQPEFSTEQLQRYIRYARTFKPKLNTESCAEIVKKYKQLRMDDAQGAGKNSYRITVRQLESMIRLSEAIARANCVDDITPAFVNEAYSLLRQSIIHVERDDIEVEEDDAEAQELENDNTNTTNGNDNVSSEEALQKPKVKITYDKYVSIMNGILQVLRQRSTEGVDGVPAGDLVQSYLELREDQFHTEEDIIYEVGLVRKVLTRLVHESIIMEIQNLTDSAVRLPFEERVFSIHPNCDIDALLSNGDVPN.

A phosphoserine mark is found at Ser96 and Ser98. The MCM domain occupies 426–633 (IYSRLTNSLA…VDRHLAKHIV (208 aa)). 476-483 (GDPSTSKS) is an ATP binding site. The short motif at 608 to 611 (SRFD) is the Arginine finger element. Acidic residues predominate over residues 748–758 (EDDAEAQELEN). Positions 748-774 (EDDAEAQELENDNTNTTNGNDNVSSEE) are disordered. The span at 759–769 (DNTNTTNGNDN) shows a compositional bias: low complexity.

This sequence belongs to the MCM family. Component of the mcm2-7 complex. The complex forms a toroidal hexameric ring with the proposed subunit order mcm2-mcm6-mcm4-mcm7-mcm3-mcm5. The heterodimers of mcm4/mcm6 and mcm3/mcm5 interact with mcm2 and mcm7. Interacts with sld3.

It is found in the nucleus. The enzyme catalyses ATP + H2O = ADP + phosphate + H(+). Functionally, acts as a component of the mcm2-7 complex (mcm complex) which is the putative replicative helicase essential for 'once per cell cycle' DNA replication initiation and elongation in eukaryotic cells. The active ATPase sites in the mcm2-7 ring are formed through the interaction surfaces of two neighboring subunits such that a critical structure of a conserved arginine finger motif is provided in trans relative to the ATP-binding site of the Walker A box of the adjacent subunit. The six ATPase active sites, however, are likely to contribute differentially to the complex helicase activity. The protein is DNA replication licensing factor mcm6 (mcm6) of Schizosaccharomyces pombe (strain 972 / ATCC 24843) (Fission yeast).